Consider the following 373-residue polypeptide: Histidinol-phosphate aminotransferase (373 aa).

Lysine 231 is modified (N6-(pyridoxal phosphate)lysine).

The protein belongs to the class-II pyridoxal-phosphate-dependent aminotransferase family. Histidinol-phosphate aminotransferase subfamily. Pyridoxal 5'-phosphate serves as cofactor.

The catalysed reaction is L-histidinol phosphate + 2-oxoglutarate = 3-(imidazol-4-yl)-2-oxopropyl phosphate + L-glutamate. It functions in the pathway amino-acid biosynthesis; L-histidine biosynthesis; L-histidine from 5-phospho-alpha-D-ribose 1-diphosphate: step 7/9. This Methanocaldococcus jannaschii (strain ATCC 43067 / DSM 2661 / JAL-1 / JCM 10045 / NBRC 100440) (Methanococcus jannaschii) protein is Histidinol-phosphate aminotransferase (hisC).